Reading from the N-terminus, the 212-residue chain is Protein HP-25 homolog 1 (212 aa).

A signal peptide spans 1-34 (MPGGRRRVGSMNIAGFWILAQFVLLLVANVKSSA). Residues 36–66 (SELCGPRGARGPPGLSGLPGPPGYTGPIGMP) are disordered. The segment covering 40-53 (GPRGARGPPGLSGL) has biased composition (low complexity). Residues 40 to 76 (GPRGARGPPGLSGLPGPPGYTGPIGMPGLTGRPGLPG) enclose the Collagen-like domain. A C1q domain is found at 82–212 (PPLPQSAFSV…VFYGFLLNGN (131 aa)). Residue N125 is glycosylated (N-linked (GlcNAc...) asparagine).

It localises to the secreted. The sequence is that of Protein HP-25 homolog 1 from Bos taurus (Bovine).